Here is a 393-residue protein sequence, read N- to C-terminus: Aspartate aminotransferase (393 aa).

L-aspartate is bound by residues Gly-38, Trp-124, and Asn-174. Lys-237 carries the N6-(pyridoxal phosphate)lysine modification.

It belongs to the class-I pyridoxal-phosphate-dependent aminotransferase family. As to quaternary structure, homodimer. It depends on pyridoxal 5'-phosphate as a cofactor.

The protein resides in the cytoplasm. The enzyme catalyses L-aspartate + 2-oxoglutarate = oxaloacetate + L-glutamate. In Bacillus subtilis (strain 168), this protein is Aspartate aminotransferase (aspB).